A 647-amino-acid chain; its full sequence is UvrABC system protein C (647 aa).

One can recognise a GIY-YIG domain in the interval 26 to 106; it reads SEPGCYLMRD…IKEHQPYFNI (81 aa). The UVR domain maps to 216–251; sequence DQLKDLLHKQMLIQSKLQEFEKAAIIRDQIKGIEQL.

It belongs to the UvrC family. In terms of assembly, interacts with UvrB in an incision complex.

Its subcellular location is the cytoplasm. In terms of biological role, the UvrABC repair system catalyzes the recognition and processing of DNA lesions. UvrC both incises the 5' and 3' sides of the lesion. The N-terminal half is responsible for the 3' incision and the C-terminal half is responsible for the 5' incision. The chain is UvrABC system protein C from Prochlorococcus marinus (strain MIT 9211).